The following is a 377-amino-acid chain: tRNA(Met) cytidine acetate ligase (377 aa).

Residues 7–20 (VTEY…HLYH), glycine 100, asparagine 153, and arginine 178 each bind ATP.

Belongs to the TmcAL family.

The protein localises to the cytoplasm. It catalyses the reaction cytidine(34) in elongator tRNA(Met) + acetate + ATP = N(4)-acetylcytidine(34) in elongator tRNA(Met) + AMP + diphosphate. Catalyzes the formation of N(4)-acetylcytidine (ac(4)C) at the wobble position of elongator tRNA(Met), using acetate and ATP as substrates. First activates an acetate ion to form acetyladenylate (Ac-AMP) and then transfers the acetyl group to tRNA to form ac(4)C34. This Staphylococcus saprophyticus subsp. saprophyticus (strain ATCC 15305 / DSM 20229 / NCIMB 8711 / NCTC 7292 / S-41) protein is tRNA(Met) cytidine acetate ligase.